We begin with the raw amino-acid sequence, 231 residues long: Potassium/proton antiporter CemA (231 aa).

The next 3 membrane-spanning stretches (helical) occupy residues 9 to 29, 116 to 136, and 191 to 211; these read FIPL…SFLF, IICF…LIIL, and IISG…KYWI.

This sequence belongs to the CemA family.

Its subcellular location is the plastid. The protein localises to the chloroplast inner membrane. It catalyses the reaction K(+)(in) + H(+)(out) = K(+)(out) + H(+)(in). Functionally, contributes to K(+)/H(+) antiport activity by supporting proton efflux to control proton extrusion and homeostasis in chloroplasts in a light-dependent manner to modulate photosynthesis. Prevents excessive induction of non-photochemical quenching (NPQ) under continuous-light conditions. Indirectly promotes efficient inorganic carbon uptake into chloroplasts. The polypeptide is Potassium/proton antiporter CemA (Manihot esculenta (Cassava)).